The primary structure comprises 352 residues: Protein-glutamate methylesterase/protein-glutamine glutaminase 1 (352 aa).

The 118-residue stretch at 5–122 folds into the Response regulatory domain; that stretch reads KVLVVDDSAF…SLDVLSVKEE (118 aa). At D56 the chain carries 4-aspartylphosphate. The CheB-type methylesterase domain occupies 155 to 352; that stretch reads PDQDRKLNKL…EITEEVLSML (198 aa). Active-site residues include S170, H197, and D297.

The protein belongs to the CheB family. Post-translationally, phosphorylated by CheA. Phosphorylation of the N-terminal regulatory domain activates the methylesterase activity.

The protein localises to the cytoplasm. The catalysed reaction is [protein]-L-glutamate 5-O-methyl ester + H2O = L-glutamyl-[protein] + methanol + H(+). The enzyme catalyses L-glutaminyl-[protein] + H2O = L-glutamyl-[protein] + NH4(+). In terms of biological role, involved in chemotaxis. Part of a chemotaxis signal transduction system that modulates chemotaxis in response to various stimuli. Catalyzes the demethylation of specific methylglutamate residues introduced into the chemoreceptors (methyl-accepting chemotaxis proteins or MCP) by CheR. Also mediates the irreversible deamidation of specific glutamine residues to glutamic acid. This is Protein-glutamate methylesterase/protein-glutamine glutaminase 1 from Syntrophomonas wolfei subsp. wolfei (strain DSM 2245B / Goettingen).